A 595-amino-acid chain; its full sequence is Aspartate--tRNA(Asp/Asn) ligase (595 aa).

An L-aspartate-binding site is contributed by Glu178. The tract at residues 202 to 205 (QIFK) is aspartate. L-aspartate is bound at residue Arg224. ATP contacts are provided by residues 224-226 (RDE) and Gln233. L-aspartate is bound at residue His458. Residue Glu488 coordinates ATP. Arg495 is an L-aspartate binding site. Position 540–543 (540–543 (GIDR)) interacts with ATP.

Belongs to the class-II aminoacyl-tRNA synthetase family. Type 1 subfamily. As to quaternary structure, homodimer.

Its subcellular location is the cytoplasm. It catalyses the reaction tRNA(Asx) + L-aspartate + ATP = L-aspartyl-tRNA(Asx) + AMP + diphosphate. In terms of biological role, aspartyl-tRNA synthetase with relaxed tRNA specificity since it is able to aspartylate not only its cognate tRNA(Asp) but also tRNA(Asn). Reaction proceeds in two steps: L-aspartate is first activated by ATP to form Asp-AMP and then transferred to the acceptor end of tRNA(Asp/Asn). This is Aspartate--tRNA(Asp/Asn) ligase from Acaryochloris marina (strain MBIC 11017).